The sequence spans 545 residues: E3 ubiquitin-protein ligase ipaH9.8 (545 aa).

Positions Met-1–Met-242 are interaction with target proteins. 8 LRR repeats span residues Asn-57–Ala-77, Gln-78–Leu-99, Lys-100–Pro-117, Ala-118–Leu-139, Leu-140–Gln-157, Ala-158–Asn-179, Val-182–Leu-203, and Asn-205–Thr-228. The segment at Ser-243–Leu-250 is linker. The tract at residues His-251 to Ser-545 is E3 ubiquitin-protein ligase catalytic domain. Residues Pro-253 to Ser-545 form the NEL domain. Cys-337 acts as the Glycyl thioester intermediate in catalysis.

Belongs to the LRR-containing bacterial E3 ligase family. In terms of assembly, also interacts with human and mouse U2AF1 (U2AF35). Post-translationally, ubiquitinated in the presence of host E1 ubiquitin-activating enzyme, E2 ubiquitin-conjugating enzyme and ubiquitin.

The protein localises to the secreted. It localises to the host cytoplasm. It is found in the host nucleus. The enzyme catalyses S-ubiquitinyl-[E2 ubiquitin-conjugating enzyme]-L-cysteine + [acceptor protein]-L-lysine = [E2 ubiquitin-conjugating enzyme]-L-cysteine + N(6)-ubiquitinyl-[acceptor protein]-L-lysine.. With respect to regulation, exists in an autoinhibited state in the absence of substrate protein, due to interactions of the leucine-rich repeats with NEL domain. Is activated upon binding to a substrate protein. Functionally, effector E3 ubiquitin ligase that interferes with host's ubiquitination pathway and modulates the acute inflammatory responses, thus facilitating bacterial colonization within the host cell. Interacts with IKBKG (NEMO) and TNIP1 (ABIN-1), a ubiquitin-binding adapter protein, which results in TNIP1-dependent 'Lys-27'-linked polyubiquitination of IKBKG. Consequently, polyubiquitinated IKBKG undergoes proteasome-dependent degradation, which perturbs NF-kappa-B activation during bacterial infection. Mediates polyubiquitination of host U2AF1, leading to its proteasomal degradation. Catalyzes 'Lys-48'-linked polyubiquitination and subsequent degradation of a subset of host guanylate-binding proteins (GBP1, GBP2, GBP4 and GBP6), thereby suppressing host cell defense. In contrast, host GBP3 and GBP7 are not ubiquitinated by IpaH9.8. Uses UBE2D2 (UBCH5B) as an E2 ubiquitin-conjugating enzyme. This Shigella sonnei (strain Ss046) protein is E3 ubiquitin-protein ligase ipaH9.8 (ipaH9.8).